A 200-amino-acid polypeptide reads, in one-letter code: Riboflavin kinase (200 aa).

Residues 1-20 form a disordered region; the sequence is MATARPSIVGPDSGPESPFP. The Mg(2+) site is built by Thr-42 and Asn-44. Glu-110 acts as the Nucleophile in catalysis.

This sequence belongs to the flavokinase family. Zn(2+) is required as a cofactor. The cofactor is Mg(2+).

The catalysed reaction is riboflavin + ATP = FMN + ADP + H(+). Its pathway is cofactor biosynthesis; FMN biosynthesis; FMN from riboflavin (ATP route): step 1/1. Catalyzes the phosphorylation of riboflavin (vitamin B2) to form flavin mononucleotide (FMN) coenzyme. The chain is Riboflavin kinase (FMN1) from Pyricularia oryzae (strain 70-15 / ATCC MYA-4617 / FGSC 8958) (Rice blast fungus).